The chain runs to 175 residues: Universal stress protein A-like protein (175 aa).

11 residues coordinate AMP: alanine 11, valine 12, asparagine 13, serine 26, cysteine 27, valine 53, glycine 131, arginine 133, threonine 145, valine 146, and serine 147.

This sequence belongs to the universal stress protein A family. In terms of assembly, homohexamer.

The protein is Universal stress protein A-like protein of Arabidopsis thaliana (Mouse-ear cress).